We begin with the raw amino-acid sequence, 547 residues long: Solute carrier family 22 member 7 (547 aa).

A run of 12 helical transmembrane segments spans residues Val21–Leu41, Ala145–Ser165, Leu173–Ser193, Leu203–Leu223, Val233–Ile253, Trp258–Pro278, Ile345–Leu365, Val374–Val396, Leu403–Ser423, Thr431–Phe451, Met465–Leu485, and Leu492–Pro512. The interval Glu521–Asp547 is disordered.

It belongs to the major facilitator (TC 2.A.1) superfamily. Organic cation transporter (TC 2.A.1.19) family.

The protein resides in the basolateral cell membrane. The protein localises to the apical cell membrane. It is found in the cell membrane. The catalysed reaction is orotate(out) + L-glutamate(in) = orotate(in) + L-glutamate(out). It catalyses the reaction 3',5'-cyclic GMP(in) = 3',5'-cyclic GMP(out). It carries out the reaction GMP(in) = GMP(out). The enzyme catalyses 2'-deoxyguanosine(in) = 2'-deoxyguanosine(out). The catalysed reaction is GDP(in) = GDP(out). It catalyses the reaction guanosine(in) = guanosine(out). It carries out the reaction GTP(in) = GTP(out). The enzyme catalyses 3',5'-cyclic AMP(in) = 3',5'-cyclic AMP(out). The catalysed reaction is creatinine(in) = creatinine(out). It catalyses the reaction prostaglandin E2(out) = prostaglandin E2(in). It carries out the reaction 2-oxoglutarate(in) = 2-oxoglutarate(out). The enzyme catalyses glutarate(in) = glutarate(out). The catalysed reaction is urate(out) = urate(in). It catalyses the reaction estrone 3-sulfate(out) = estrone 3-sulfate(in). Functionally, functions as a Na(+)-independent bidirectional multispecific transporter. Contributes to the renal and hepatic elimination of endogenous organic compounds from the systemic circulation into the urine and bile, respectively. Capable of transporting a wide range of purine and pyrimidine nucleobases, nucleosides and nucleotides, with cGMP, 2'deoxyguanosine and GMP being the preferred substrates. Functions as a pH- and chloride-independent cGMP bidirectional facilitative transporter that can regulate both intracellular and extracellular levels of cGMP and may be involved in cGMP signaling pathways. Mediates orotate/glutamate bidirectional exchange and most likely display a physiological role in hepatic release of glutamate into the blood. Involved in renal secretion and possible reabsorption of creatinine. Able to uptake prostaglandin E2 (PGE2) and may contribute to PGE2 renal excretion. Also transports alpha-ketoglutarate and urate. Apart from the orotate/glutamate exchange, the counterions for the uptake of other SLC22A7/OAT2 substrates remain to be identified. In Sus scrofa (Pig), this protein is Solute carrier family 22 member 7 (SLC22A7).